Consider the following 463-residue polypeptide: MHEVTVVGAGLVGCLAALAFADRGHKVALYDARPDLRSEAELKNASLRSINLAVSARGIEALRSVDTKMAERVLADIIPMYGRMIHDLQGGQHAQAYGLWGECINSIDRAQLNRTMLDVIEDNANITFFPEHKLTNISLSRKDKKYQRPTSTFETKEGEERVVESDYIIGADGAFSKTRDRLQRYVRMNYAQQYIDCVYLELKIPKADGPDPFSISPNHLHIWPRHKYMLIALANGDGSFTSTLFAPPALMEQVCESQNTFISFFKEQFPDAYELMGESQILESYENNPRSPLVSLKCSPYNHKGECLLVGDAAHCMVPFYGQGMNAGFEDIRVLMEILDEKKWNVEEAFNTYTERRHKDLVAIVDLAMRNYVEMSHSVVSLPYLIRKKVDGVLGRVFSSAWVPLYSMVSFRADIPYSKALSRSARQDRIIGNIVNWTSFAGLVGMGALFYYKGRHLFGRLFE.

This sequence belongs to the aromatic-ring hydroxylase family. KMO subfamily. The cofactor is FAD.

The protein localises to the mitochondrion outer membrane. The catalysed reaction is L-kynurenine + NADPH + O2 + H(+) = 3-hydroxy-L-kynurenine + NADP(+) + H2O. Its pathway is cofactor biosynthesis; NAD(+) biosynthesis; quinolinate from L-kynurenine: step 1/3. In terms of biological role, catalyzes the hydroxylation of L-kynurenine (L-Kyn) to form 3-hydroxy-L-kynurenine (L-3OHKyn). Required for synthesis of quinolinic acid. This is Kynurenine 3-monooxygenase from Yarrowia lipolytica (strain CLIB 122 / E 150) (Yeast).